Reading from the N-terminus, the 110-residue chain is Large ribosomal subunit protein uL22 (110 aa).

Belongs to the universal ribosomal protein uL22 family. In terms of assembly, part of the 50S ribosomal subunit.

Its function is as follows. This protein binds specifically to 23S rRNA; its binding is stimulated by other ribosomal proteins, e.g. L4, L17, and L20. It is important during the early stages of 50S assembly. It makes multiple contacts with different domains of the 23S rRNA in the assembled 50S subunit and ribosome. In terms of biological role, the globular domain of the protein is located near the polypeptide exit tunnel on the outside of the subunit, while an extended beta-hairpin is found that lines the wall of the exit tunnel in the center of the 70S ribosome. The polypeptide is Large ribosomal subunit protein uL22 (Acinetobacter baumannii (strain ACICU)).